Reading from the N-terminus, the 506-residue chain is Maturase K (506 aa).

This sequence belongs to the intron maturase 2 family. MatK subfamily.

It localises to the plastid. Its subcellular location is the chloroplast. Usually encoded in the trnK tRNA gene intron. Probably assists in splicing its own and other chloroplast group II introns. The sequence is that of Maturase K from Angiopteris evecta (Mule's foot fern).